Here is a 168-residue protein sequence, read N- to C-terminus: Small ribosomal subunit protein uS5 (168 aa).

The region spanning 17-80 (IEDQLVAVNR…EDGKKKMINV (64 aa)) is the S5 DRBM domain.

This sequence belongs to the universal ribosomal protein uS5 family. Part of the 30S ribosomal subunit. Contacts proteins S4 and S8.

Functionally, with S4 and S12 plays an important role in translational accuracy. In terms of biological role, located at the back of the 30S subunit body where it stabilizes the conformation of the head with respect to the body. The polypeptide is Small ribosomal subunit protein uS5 (Lactobacillus helveticus (strain DPC 4571)).